We begin with the raw amino-acid sequence, 482 residues long: ATP synthase subunit beta (482 aa).

167 to 174 contributes to the ATP binding site; that stretch reads GGAGVGKT.

It belongs to the ATPase alpha/beta chains family. In terms of assembly, F-type ATPases have 2 components, CF(1) - the catalytic core - and CF(0) - the membrane proton channel. CF(1) has five subunits: alpha(3), beta(3), gamma(1), delta(1), epsilon(1). CF(0) has three main subunits: a(1), b(2) and c(9-12). The alpha and beta chains form an alternating ring which encloses part of the gamma chain. CF(1) is attached to CF(0) by a central stalk formed by the gamma and epsilon chains, while a peripheral stalk is formed by the delta and b chains.

Its subcellular location is the cell membrane. The enzyme catalyses ATP + H2O + 4 H(+)(in) = ADP + phosphate + 5 H(+)(out). Produces ATP from ADP in the presence of a proton gradient across the membrane. The catalytic sites are hosted primarily by the beta subunits. This is ATP synthase subunit beta from Corynebacterium aurimucosum (strain ATCC 700975 / DSM 44827 / CIP 107346 / CN-1) (Corynebacterium nigricans).